A 3394-amino-acid chain; its full sequence is MNNDFMKNEKDDYDKVNEEEYSLENFRGIDMNNNVDISNMNNNLNDVGELINIDNNDKYDEDQLSLIKESLEYGELLLSNVKEEDENNRREHFKKNDYMKDTEDVHYKESKIGQDKRFMHSLCVKELKSTEEGELFDDEKYKDKDTLINMLRKKLEIKIKDYNLIMDTLILTKEECSKKEEQLKDYKMKYNKMEKECYSLKNEIERKNNEKHLNIGSFSFYKNEYDDMKYKLLKCEEKNKILLNKNQELHQTIIQMKNDSYNQNIKFKKDIDVLTEDKKNILIQNKNFTKQNKILIDKYLRQEKIIYKLKKHNEEQEIIIKECHKKIEFVNKNSVNHLNKVRDVLNKSLIKSEEHVKLYTNLKKENDSLKIEYNKSKTNIQQLNEQLVNYKNFIKEMEKKYKQLVVKNNSLFSITHDFINLKNSNIIIIRRTSDMKQIFKMYNLDIEHFNEQDHLSVIYIYEILYNTNDNNNNDNDNNNDNNNNNNNNNDNNNNNNNDNNNNNNNYNNIMMMIENMNSGNHPNSNNLHNYRHNTNDENNLSSLKTSFRYKINNKSGKSRSIKSRSHFSGDNEYIQDQLSNREMKDHYNYIERYNHSSNRNDIHNLYYMEENVSHNNNKSDYDEDGDAENNNYYIKIKKNKYKKLNDLLNKAQMKIITLTRANEMFEKYCSNIKNTLIRDDMKKFRKPDISDVHILHNEKIYLEKLLNEKLNYIKDIEKKLDELHGVINKNKEDIYILQVEKQTLIKVISSVYDYTKMESENHIFKMNTTWNKMLNNVHMSSNKDYNNQNNQNIENNQNIENNQNNQNIENNQNIENNQNNQNNQNNQNNQNNQNNQNNQNNAGIHISPDDFLKYRMSLEKFIQFTIKEHIVYIMKDEKKKTSNIIKESISLKKKHTKKSIINNNNDNNNEDDDDNDMLSVMYSNDDVIKNKRKENNKEILEEHVSFSSFSNNEYIAHSFNSILLQLSNYIFNIECKQMEYFKNSNLLSYVDDYTITIELFYRLKKYNNIFSIEQILGTQYPSILQKLHDGIYCLKDNNKKKNNDGDNKSQEDDDGNKKKNNDGDNKSQEDDDGNKKKNNDGDNKSQEDDYGNKKKNNDDDDDDSYKIELIVDELNKCKKNYTDEELYELMKGSDFDIFKKYKNFYLNHFININNIFSTIISFHIHNIEDKYKKVYERYFNLFNFNFSNVELSFDLLIRRFDKILRLTKKYEQLLEENYEKIKNKNEKEEYLHACIKELEMNLERYNNEKIILDEQINEKEKKINIINEKYLILEKEYEEYQNKNIFINAQIENLEKEKKQLQEEIIQKDMINVKLNEKNCDIIKIYEKEKQYLHTLLQENKDSHNYLKDKFENLLNLNEKLKYDHDISLNKINTLWLEEKENNKKNTFHMNNLRVENNNLLLKMKELQNKYNIIKKELNERIKQINVFRNNVSTLSLRDNRSTRGSIHQINNMYMNNTHLGFMGASKINNNISNLYYSNMIHMSHRGSIIKNKEDAEGNSTQARMNNKDSTDNIINNIHNTDNINNMNNINNNTLNSINSNHLYYPFPFHNNVNSPKMVGMCDVTLASGVNKKDDFLLNLEENEENSFLEYEIRIKSLQEELCDKESEILKIKGEKNILITCIETWKCFCKNSKEEISRLKEICKEQLEKHKEFLLINKSNEDKLKYINSLLCDEKDKYDIVVKDIKNNMRNEIDKLNNDINEKSYEIKLLKHENNNLINEMNILKNKETENMNIKQKEEDYIKLIKKDKTNIQNEYNDLLEKYNEVVVKNNMLYNDMNVLLKEHKEEIFLLKENIKILQKDNTYLNDMFKNQINYVDNNLLKNRLDQLFNINQDLQKHLDTNQKHLEQLKYDYIEIKERLKIEKTKINKQEKYIIQLQKDNNLILNDFNSTTTTTNNNNNNDNNNDNNNDNNDNNNDTYQQFIHSLKANLENSRLELKELSNLNEKIQLSDEKNRMKITILEDKLFKNEKDKMKLQQIIDDNNKNYMIQYNKLKTNLDMLSEENRMLLLNKEEYEKQIEQLNHDHKLFISTKNNDIQIIENEKLQEQVDQYITTINEKDKIIVHLNLQIKKLANQNEHMRSRCDIFNVAHSQDNIKNDHMVVGEDIMGDTNHDVNKNIDQGTNQHINQGTNQHINQGTNQHDTCDGPNYNYVKVQNATNREDNKNKERNLSQEIYKYINENIDLTSELEKKNDMLENYKNELKEKNEEIYKLNNDIDMLSNNCKKLKESIMMMEKYKIIMNNNIQEKDEIIENLKNKYNNKLDDLINNYSVVDKSIVSCFEDSNIMSPSCNDILNVFNNLSKSNKKVCTNMDICNENMDSISSINNVNNINNVNNINNVNNINNVNNINNVKNIVDINNYLVNNLQLNKDNDNIIIIKFNILKLFKLGSCYLYIINRNLKEIQMLKNQILSLEESIKSLNEFINNLKNENEKNELIKINNFEEILKLKNNLQDNESCIQNLNNYLKKNEELNKINVKNIFKYKGYIIHLIQQSNVFCKIFKHFNENKIIDQSIINKLLYLKKSFDFYMYDSVIQEIRENKNIIINQDFLTDEYFKHIQTFTKTCNVLIQRGYLSILKDTNNDFFIQNKQSNQQGNQNGNHINMCNIYPDDEINVTADQQIFDGTENVQQSLQNEEDYVNNEEMYTDKMDLDNNMNGDDDDDDDDDDDDDNNNNNNNNNNNNNNNMGDEDNHLVNAFNNHNLLTNGNVKSDQINNETLERYEENIIQNIYTNDNVDNNQVIENINKILIKDKQDIINNDELKNEHNNLIRLINESIENAHNLENVYVQNDANNLINDNIKKEETLTYVDEKDNVSNESNSKCDDDKKENEDIIQAKNENYPVSTHYDNNDDINKDNINNDNNNDNINDDNNNDNINNDNNNDNINNDNINNDNINNDNNNDNNNDNSNNGFVCELSSNINDFNNILNVNKDNFQGINKSNNFSTNLSEYNYDAYVKIVEAGSALENKKQQDKKRKYFSDSEITKENGYLGESNSIKIRKVSVGGDNDNNDDDNNDDNDDDDNDDDNNDDDNNNDDDNDDSYDDEEKEQENYSNDVNTELNNHVTFEDISVHNNIQENKKNYFSNVHENTFNLHVDENVHEDLQNYEDYVNNNNNNNDDDNEEESNNSCYIISSDDEGDKKNVSKQNDDDEDDDDNGDDDDNEDDDDNEDDDNGDDDDNEDDDNGDDDDNEDDNYDDEDNDNYENEDDDNYANEDDDNYENDDDDNYENDDDDNYENDDDNYENDDDDNYENGDDDNDNDHNDDNNDEEKYSCHDDKNEHTNNDLLNIDHDNNKNNITDELYSTYNVSVSHNKDPSNKENEIQNLISIDSSNENDENDENDENDENDENDENDENDENDENDENDEKDENDENDENDENFDNNNEGTLNEMNSEE.

Low complexity-rich tracts occupy residues 471 to 508 (NNND…NYNN), 515 to 528 (NMNS…NNLH), and 786 to 841 (NNQN…NQNN). Disordered stretches follow at residues 471 to 539 (NNND…DENN), 779 to 844 (MSSN…NAGI), 1038 to 1099 (NKKK…NNDD), 1892 to 1918 (TTTT…NNND), 2648 to 2693 (KMDL…DNHL), 2835 to 2909 (AKNE…NSNN), 3000 to 3057 (VSVG…DVNT), and 3107 to 3394 (DYVN…NSEE). Over residues 1038–1097 (NKKKNNDGDNKSQEDDDGNKKKNNDGDNKSQEDDDGNKKKNNDGDNKSQEDDYGNKKKNN) the composition is skewed to basic and acidic residues. Residues 2657 to 2671 (GDDDDDDDDDDDDDN) show a composition bias toward acidic residues. A compositionally biased stretch (low complexity) spans 2672–2686 (NNNNNNNNNNNNNNM). Residues 2836–2846 (KNENYPVSTHY) show a composition bias toward polar residues. 2 stretches are compositionally biased toward low complexity: residues 2855–2865 (DNINNDNNNDN) and 2872–2909 (NDNI…NSNN). Composition is skewed to acidic residues over residues 3007-3047 (DNND…EEKE) and 3147-3257 (DDDE…DDND). Over residues 3258-3292 (NDHNDDNNDEEKYSCHDDKNEHTNNDLLNIDHDNN) the composition is skewed to basic and acidic residues. Residues 3300-3309 (LYSTYNVSVS) are compositionally biased toward polar residues. Positions 3310–3320 (HNKDPSNKENE) are enriched in basic and acidic residues. The segment covering 3321–3330 (IQNLISIDSS) has biased composition (polar residues). The segment covering 3331–3379 (NENDENDENDENDENDENDENDENDENDENDENDEKDENDENDENDENF) has biased composition (acidic residues). Over residues 3385-3394 (GTLNEMNSEE) the composition is skewed to polar residues.

The chain is Protein PFC0760c from Plasmodium falciparum (isolate 3D7).